Reading from the N-terminus, the 1050-residue chain is Diacylglycerol kinase iota (1050 aa).

2 disordered regions span residues 52-73 and 325-356; these read NPSS…SGSG and PQNS…ENKG. Positions 332–347 are enriched in basic residues; it reads SNRKKKRTSFKRKASK. In terms of domain architecture, DAGKc spans 367–502; the sequence is PLMKPLLVFV…DRWNLHVERN (136 aa). ANK repeat units lie at residues 943-972 and 979-1008; these read GHCS…AELL and TGET…SLRQ. Positions 1048–1050 match the PDZ-binding motif; the sequence is TAV.

It belongs to the eukaryotic diacylglycerol kinase family. As to quaternary structure, interacts (via PDZ-binding motif) with DLG4; controls the localization of DGKI to the synapse. Interacts (via PDZ-binding motif) with DLG1. Interacts (via PDZ-binding motif) with DLG2. Interacts (via PDZ-binding motif) with DLG3. May interact with RASGRP3; involved in the regulation of RASGRP3 activity. Specifically expressed in brain (at protein level). Expressed in hippocampus, cerebellum, brain stem and spinal cord (at protein level). Highly expressed in hippocampus, cerebellar cortex, olfactory bulb, and olfactory tubercle and to lower extent in the cerebral cortex, caudate putamen, and thalamus. Not detected in the white matter. Also expressed in eye. In terms of tissue distribution, major isoform in brain (at protein level). As to expression, minor isoform in brain (at protein level). Expressed in brain (at protein level).

It is found in the cell projection. It localises to the axon. The protein resides in the dendrite. Its subcellular location is the presynapse. The protein localises to the postsynapse. It is found in the postsynaptic density. It localises to the synaptic cell membrane. The protein resides in the cytoplasmic vesicle. Its subcellular location is the secretory vesicle. The protein localises to the synaptic vesicle membrane. It is found in the cytoplasm. It localises to the cytosol. The protein resides in the nucleus. The catalysed reaction is a 1,2-diacyl-sn-glycerol + ATP = a 1,2-diacyl-sn-glycero-3-phosphate + ADP + H(+). The enzyme catalyses 1,2-di-(9Z-octadecenoyl)-sn-glycerol + ATP = 1,2-di-(9Z-octadecenoyl)-sn-glycero-3-phosphate + ADP + H(+). It carries out the reaction 1-octadecanoyl-2-(9Z,12Z)-octadecadienoyl-sn-glycerol + ATP = 1-octadecanoyl-2-(9Z,12Z-octadecadienoyl)-sn-glycero-3-phosphate + ADP + H(+). It catalyses the reaction 1-octadecanoyl-2-(5Z,8Z,11Z,14Z-eicosatetraenoyl)-sn-glycerol + ATP = 1-octadecanoyl-2-(5Z,8Z,11Z,14Z-eicosatetraenoyl)-sn-glycero-3-phosphate + ADP + H(+). It participates in lipid metabolism; glycerolipid metabolism. Its activity is regulated as follows. Activated by phosphatidylserine. Its function is as follows. Diacylglycerol kinase that converts diacylglycerol/DAG into phosphatidic acid/phosphatidate/PA and regulates the respective levels of these two bioactive lipids. Thereby, acts as a central switch between the signaling pathways activated by these second messengers with different cellular targets and opposite effects in numerous biological processes. Has probably no preference for any of the diacylglycerols in terms of the acyl chain composition, especially for the acyl chain at the sn-2 position. By controlling the diacylglycerol/DAG-mediated activation of RASGRP3, negatively regulates the Rap1 signaling pathway. May play a role in presynaptic diacylglycerol/DAG signaling and control neurotransmitter release during metabotropic glutamate receptor-dependent long-term depression. In terms of biological role, has a decreased affinity for ATP and a reduced diacylglycerol kinase activity. Has no preference for any of the diacylglycerols in terms of the acyl chain composition. Has no diacylglycerol kinase activity. In Rattus norvegicus (Rat), this protein is Diacylglycerol kinase iota.